The primary structure comprises 205 residues: Adenylyl-sulfate kinase (205 aa).

39–46 (GLSGAGKS) is an ATP binding site. Catalysis depends on Ser-113, which acts as the Phosphoserine intermediate.

The protein belongs to the APS kinase family.

It carries out the reaction adenosine 5'-phosphosulfate + ATP = 3'-phosphoadenylyl sulfate + ADP + H(+). It functions in the pathway sulfur metabolism; hydrogen sulfide biosynthesis; sulfite from sulfate: step 2/3. Functionally, catalyzes the synthesis of activated sulfate. This is Adenylyl-sulfate kinase from Vibrio parahaemolyticus serotype O3:K6 (strain RIMD 2210633).